Consider the following 433-residue polypeptide: Gamma-glutamyl phosphate reductase (433 aa).

Belongs to the gamma-glutamyl phosphate reductase family.

The protein localises to the cytoplasm. It catalyses the reaction L-glutamate 5-semialdehyde + phosphate + NADP(+) = L-glutamyl 5-phosphate + NADPH + H(+). The protein operates within amino-acid biosynthesis; L-proline biosynthesis; L-glutamate 5-semialdehyde from L-glutamate: step 2/2. In terms of biological role, catalyzes the NADPH-dependent reduction of L-glutamate 5-phosphate into L-glutamate 5-semialdehyde and phosphate. The product spontaneously undergoes cyclization to form 1-pyrroline-5-carboxylate. This Rhodopseudomonas palustris (strain BisB18) protein is Gamma-glutamyl phosphate reductase.